We begin with the raw amino-acid sequence, 378 residues long: Ribosomal RNA large subunit methyltransferase G (378 aa).

The protein belongs to the methyltransferase superfamily. RlmG family.

It localises to the cytoplasm. It catalyses the reaction guanosine(1835) in 23S rRNA + S-adenosyl-L-methionine = N(2)-methylguanosine(1835) in 23S rRNA + S-adenosyl-L-homocysteine + H(+). Functionally, specifically methylates the guanine in position 1835 (m2G1835) of 23S rRNA. The protein is Ribosomal RNA large subunit methyltransferase G of Shewanella baltica (strain OS195).